Here is a 626-residue protein sequence, read N- to C-terminus: DNA-directed RNA polymerase subunit gamma (626 aa).

The Zn(2+) site is built by C71, C73, C86, and C89. Residues D467, D469, and D471 each coordinate Mg(2+).

It belongs to the RNA polymerase beta' chain family. RpoC1 subfamily. As to quaternary structure, in cyanobacteria the RNAP catalytic core is composed of 2 alpha, 1 beta, 1 beta', 1 gamma and 1 omega subunit. When a sigma factor is associated with the core the holoenzyme is formed, which can initiate transcription. The cofactor is Mg(2+). Zn(2+) is required as a cofactor.

It catalyses the reaction RNA(n) + a ribonucleoside 5'-triphosphate = RNA(n+1) + diphosphate. DNA-dependent RNA polymerase catalyzes the transcription of DNA into RNA using the four ribonucleoside triphosphates as substrates. The protein is DNA-directed RNA polymerase subunit gamma of Microcystis aeruginosa (strain NIES-843 / IAM M-2473).